A 472-amino-acid polypeptide reads, in one-letter code: Argininosuccinate lyase (472 aa).

The protein belongs to the lyase 1 family. Argininosuccinate lyase subfamily.

The protein resides in the cytoplasm. The enzyme catalyses 2-(N(omega)-L-arginino)succinate = fumarate + L-arginine. It participates in amino-acid biosynthesis; L-arginine biosynthesis; L-arginine from L-ornithine and carbamoyl phosphate: step 3/3. This Synechococcus sp. (strain CC9605) protein is Argininosuccinate lyase.